An 85-amino-acid chain; its full sequence is MAHKKAGGSTRNGRDSESKRLGVKRFGGESVLAGNIIVRQRGTKFHAGTNVGIGKDHTLFALSEGKVKFEVKGPKNRKFVSIEAE.

The segment at 1-22 (MAHKKAGGSTRNGRDSESKRLG) is disordered.

Belongs to the bacterial ribosomal protein bL27 family.

This is Large ribosomal subunit protein bL27 from Aliivibrio fischeri (strain ATCC 700601 / ES114) (Vibrio fischeri).